We begin with the raw amino-acid sequence, 715 residues long: Methionine--tRNA ligase (715 aa).

Positions 17–27 (PYANGPIHLGH) match the 'HIGH' region motif. Zn(2+) contacts are provided by Cys148, Cys151, Cys161, and Cys164. Positions 359–363 (KMSKS) match the 'KMSKS' region motif. Residue Lys362 participates in ATP binding. Residues 614 to 715 (DLSKVELRVG…KDAKPGDRLK (102 aa)) enclose the tRNA-binding domain.

This sequence belongs to the class-I aminoacyl-tRNA synthetase family. MetG type 1 subfamily. As to quaternary structure, homodimer. Zn(2+) is required as a cofactor.

It is found in the cytoplasm. It catalyses the reaction tRNA(Met) + L-methionine + ATP = L-methionyl-tRNA(Met) + AMP + diphosphate. Is required not only for elongation of protein synthesis but also for the initiation of all mRNA translation through initiator tRNA(fMet) aminoacylation. In Leptospira interrogans serogroup Icterohaemorrhagiae serovar copenhageni (strain Fiocruz L1-130), this protein is Methionine--tRNA ligase.